The primary structure comprises 74 residues: Sec-independent protein translocase protein TatA (74 aa).

The chain crosses the membrane as a helical span at residues 1 to 21; the sequence is MGGISIWQLLIIVAIVVLLFG. The interval 45–74 is disordered; it reads EEPKDAEFKSLDKAENTAQTKKEEKEKEQA.

It belongs to the TatA/E family. In terms of assembly, the Tat system comprises two distinct complexes: a TatABC complex, containing multiple copies of TatA, TatB and TatC subunits, and a separate TatA complex, containing only TatA subunits. Substrates initially bind to the TatABC complex, which probably triggers association of the separate TatA complex to form the active translocon.

Its subcellular location is the cell inner membrane. Functionally, part of the twin-arginine translocation (Tat) system that transports large folded proteins containing a characteristic twin-arginine motif in their signal peptide across membranes. TatA could form the protein-conducting channel of the Tat system. This chain is Sec-independent protein translocase protein TatA, found in Actinobacillus succinogenes (strain ATCC 55618 / DSM 22257 / CCUG 43843 / 130Z).